Consider the following 265-residue polypeptide: S-adenosylmethionine decarboxylase proenzyme (265 aa).

The active-site Schiff-base intermediate with substrate; via pyruvic acid is the S114. A Pyruvic acid (Ser); by autocatalysis modification is found at S114. The active-site Proton acceptor; for processing activity is H119. C142 acts as the Proton donor; for catalytic activity in catalysis.

It belongs to the prokaryotic AdoMetDC family. Type 2 subfamily. Heterooctamer of four alpha and four beta chains arranged as a tetramer of alpha/beta heterodimers. Pyruvate is required as a cofactor. In terms of processing, is synthesized initially as an inactive proenzyme. Formation of the active enzyme involves a self-maturation process in which the active site pyruvoyl group is generated from an internal serine residue via an autocatalytic post-translational modification. Two non-identical subunits are generated from the proenzyme in this reaction, and the pyruvate is formed at the N-terminus of the alpha chain, which is derived from the carboxyl end of the proenzyme. The post-translation cleavage follows an unusual pathway, termed non-hydrolytic serinolysis, in which the side chain hydroxyl group of the serine supplies its oxygen atom to form the C-terminus of the beta chain, while the remainder of the serine residue undergoes an oxidative deamination to produce ammonia and the pyruvoyl group blocking the N-terminus of the alpha chain.

The enzyme catalyses S-adenosyl-L-methionine + H(+) = S-adenosyl 3-(methylsulfanyl)propylamine + CO2. It functions in the pathway amine and polyamine biosynthesis; S-adenosylmethioninamine biosynthesis; S-adenosylmethioninamine from S-adenosyl-L-methionine: step 1/1. Functionally, catalyzes the decarboxylation of S-adenosylmethionine to S-adenosylmethioninamine (dcAdoMet), the propylamine donor required for the synthesis of the polyamines spermine and spermidine from the diamine putrescine. In Buchnera aphidicola subsp. Acyrthosiphon pisum (strain 5A), this protein is S-adenosylmethionine decarboxylase proenzyme.